A 501-amino-acid chain; its full sequence is Group 3 secretory phospholipase A2 (501 aa).

An N-terminal signal peptide occupies residues 1–19; it reads MGVLVVLLGVLSFLGRTLG. The segment at 119–139 is disordered; that stretch reads RGPAESPAGTREKRAAGQNGV. The tract at residues 150 to 291 is phospholipase A2-like; sequence GWTVPGTLWC…SWSSPATSLT (142 aa). Positions 158, 160, and 162 each coordinate Ca(2+). 4 cysteine pairs are disulfide-bonded: C159/C181, C180/C220, C187/C213, and C211/C244. The N-linked (GlcNAc...) asparagine glycan is linked to N167. The active site involves H184. D185 provides a ligand contact to Ca(2+). The active site involves D214. The N-linked (GlcNAc...) asparagine glycan is linked to N280. Residues 284-298 are compositionally biased toward polar residues; sequence SSPATSLTPSPQNPA. The disordered stretch occupies residues 284–339; it reads SSPATSLTPSPQNPALSRPQPMQHPQQWPSEWKESKSPSKTNATALQAPVASPGSD. N-linked (GlcNAc...) asparagine glycosylation is found at N325 and N403.

This sequence belongs to the phospholipase A2 family. The cofactor is Ca(2+). N-glycosylation does not affect the catalytic activity, but is required for proper secretion. A nonglycosylated form was observed in several cell types. In terms of processing, in several cell types, the N- and C-termini are cleaved off.

The protein localises to the secreted. The protein resides in the cell membrane. It is found in the cytoplasm. Its subcellular location is the cytoskeleton. It localises to the microtubule organizing center. The protein localises to the centrosome. The protein resides in the centriole. It is found in the recycling endosome. The enzyme catalyses a 1,2-diacyl-sn-glycero-3-phosphocholine + H2O = a 1-acyl-sn-glycero-3-phosphocholine + a fatty acid + H(+). It carries out the reaction 1-hexadecanoyl-2-(9Z,12Z-octadecadienoyl)-sn-glycero-3-phosphocholine + H2O = (9Z,12Z)-octadecadienoate + 1-hexadecanoyl-sn-glycero-3-phosphocholine + H(+). It catalyses the reaction 1-hexadecanoyl-2-(5Z,8Z,11Z,14Z-eicosatetraenoyl)-sn-glycero-3-phosphocholine + H2O = 1-hexadecanoyl-sn-glycero-3-phosphocholine + (5Z,8Z,11Z,14Z)-eicosatetraenoate + H(+). The catalysed reaction is 1-hexadecanoyl-2-(9Z,12Z-octadecadienoyl)-sn-glycero-3-phosphoethanolamine + H2O = 1-hexadecanoyl-sn-glycero-3-phosphoethanolamine + (9Z,12Z)-octadecadienoate + H(+). The enzyme catalyses 1-hexadecanoyl-2-(5Z,8Z,11Z,14Z-eicosatetraenoyl)-sn-glycero-3-phosphoethanolamine + H2O = 1-hexadecanoyl-sn-glycero-3-phosphoethanolamine + (5Z,8Z,11Z,14Z)-eicosatetraenoate + H(+). In terms of biological role, secretory calcium-dependent phospholipase A2 that primarily targets extracellular phospholipids. Hydrolyzes the ester bond of the fatty acyl group attached at sn-2 position of phospholipids without apparent head group selectivity. Contributes to phospholipid remodeling of low-density lipoprotein (LDL) and high-density lipoprotein (HDL) particles. Hydrolyzes LDL phospholipids releasing unsaturated fatty acids that regulate macrophage differentiation toward foam cells. May act in an autocrine and paracrine manner. Secreted by immature mast cells, acts on nearby fibroblasts upstream to PTDGS to synthesize prostaglandin D2 (PGD2), which in turn promotes mast cell maturation and degranulation via PTGDR. Secreted by epididymal epithelium, acts on immature sperm cells within the duct, modulating the degree of unsaturation of the fatty acyl components of phosphatidylcholines required for acrosome assembly and sperm cell motility. Facilitates the replacement of fatty acyl chains in phosphatidylcholines in sperm membranes from omega-6 and omega-9 to omega-3 polyunsaturated fatty acids (PUFAs). Coupled to lipoxygenase pathway, may process omega-6 PUFAs to generate oxygenated lipid mediators in the male reproductive tract. At pericentrosomal preciliary compartment, negatively regulates ciliogenesis likely by regulating endocytotic recycling of ciliary membrane protein. Coupled to cyclooxygenase pathway provides arachidonate to generate prostaglandin E2 (PGE2), a potent immunomodulatory lipid in inflammation and tumorigenesis. At colonic epithelial barrier, preferentially hydrolyzes phospholipids having arachidonate and docosahexaenoate at sn-2 position, contributing to the generation of oxygenated metabolites involved in colonic stem cell homeostasis. Releases C16:0 and C18:0 lysophosphatidylcholine subclasses from neuron plasma membranes and promotes neurite outgrowth and neuron survival. The polypeptide is Group 3 secretory phospholipase A2 (PLA2G3) (Bos taurus (Bovine)).